Reading from the N-terminus, the 570-residue chain is 4-coumarate--CoA ligase 4 (570 aa).

6 residues coordinate ATP: Ser218, Ser219, Gly220, Thr221, Thr222, and Lys226. Tyr268 serves as a coordination point for (E)-4-coumaroyl-AMP. Arg289 provides a ligand contact to CoA. The interval 291–360 (ELNLVMELIQ…LKFPNAIFGQ (70 aa)) is SBD1. (E)-4-coumaroyl-AMP is bound by residues Ala338, Gln360, Gly361, and Thr365. ATP is bound by residues Gln360, Gly361, Thr365, Asp448, and Arg463. The tract at residues 361-427 (GYGMTESGTV…VRGHQLMKGY (67 aa)) is SBD2. Residues Lys465 and Lys469 each coordinate (E)-4-coumaroyl-AMP. Residues Lys471 and Gly472 each contribute to the CoA site. An ATP-binding site is contributed by Lys554.

This sequence belongs to the ATP-dependent AMP-binding enzyme family. Mg(2+) is required as a cofactor.

The enzyme catalyses (E)-sinapate + ATP + CoA = (E)-sinapoyl-CoA + AMP + diphosphate. It carries out the reaction (E)-4-coumarate + ATP + CoA = (E)-4-coumaroyl-CoA + AMP + diphosphate. It catalyses the reaction (E)-caffeate + ATP + CoA = (E)-caffeoyl-CoA + AMP + diphosphate. The catalysed reaction is (E)-ferulate + ATP + CoA = (E)-feruloyl-CoA + AMP + diphosphate. The enzyme catalyses (E)-sinapate + ATP + H(+) = (E)-sinapoyl-AMP + diphosphate. It carries out the reaction (E)-sinapoyl-AMP + CoA = (E)-sinapoyl-CoA + AMP + H(+). It catalyses the reaction (E)-4-coumarate + ATP + H(+) = (E)-4-coumaroyl-AMP + diphosphate. The catalysed reaction is (E)-4-coumaroyl-AMP + CoA = (E)-4-coumaroyl-CoA + AMP + H(+). The enzyme catalyses (E)-caffeate + ATP + H(+) = (E)-caffeoyl-AMP + diphosphate. It carries out the reaction (E)-caffeoyl-AMP + CoA = (E)-caffeoyl-CoA + AMP + H(+). It catalyses the reaction (E)-ferulate + ATP + H(+) = (E)-feruloyl-AMP + diphosphate. The catalysed reaction is (E)-feruloyl-AMP + CoA = (E)-feruloyl-CoA + AMP + H(+). It participates in phytoalexin biosynthesis; 3,4',5-trihydroxystilbene biosynthesis; 3,4',5-trihydroxystilbene from trans-4-coumarate: step 1/2. Produces CoA thioesters of a variety of hydroxy- and methoxy-substituted cinnamic acids, which are used to synthesize several phenylpropanoid-derived compounds, including anthocyanins, flavonoids, isoflavonoids, coumarins, lignin, suberin and wall-bound phenolics. Follows a two-step reaction mechanism, wherein the carboxylate substrate first undergoes adenylation by ATP, followed by a thioesterification in the presence of CoA to yield the final CoA thioesters. The sequence is that of 4-coumarate--CoA ligase 4 from Arabidopsis thaliana (Mouse-ear cress).